The primary structure comprises 20 residues: Flagellar filament 33 kDa core protein (20 aa).

This sequence belongs to the bacterial flagellin family. As to quaternary structure, the flagellum consists of an outer layer composed of repeating units of FlaA around a core that contains one or all of five antigenically related polypeptides.

Its subcellular location is the periplasmic flagellum. It is found in the periplasm. Its function is as follows. Component of the core of the flagella. The polypeptide is Flagellar filament 33 kDa core protein (Spirochaeta aurantia).